The chain runs to 1066 residues: Phosphatidylinositol 4-kinase PIK1 (1066 aa).

The 133-residue stretch at 1–133 (MHKASSSKKS…GFQVARRVLN (133 aa)) folds into the PIK helical domain. Phosphoserine is present on residues serine 10 and serine 236. Disordered stretches follow at residues 218 to 240 (KKTSRSKRVSSNRSSTPTSPIDL), 303 to 411 (DGKN…KKAN), and 564 to 624 (NENR…LGDM). Residues 342 to 356 (NNEDETGGETEEDAD) are compositionally biased toward acidic residues. 2 stretches are compositionally biased toward polar residues: residues 374–411 (QPRTSSASSASLEGTPKLNRTNSQPLSRQAFKNSKKAN) and 570–597 (STLTSNNTRSSVYDSNSFNNGASRNEGL). Serine 384 is subject to Phosphoserine. Threonine 394 bears the Phosphothreonine mark. Phosphoserine occurs at positions 396 and 592. A compositionally biased stretch (low complexity) spans 598–609 (SSTSRSDSASTA). Residues 770-1049 (ATKKERIRKT…FLIGKSLGSI (280 aa)) enclose the PI3K/PI4K catalytic domain. Positions 776–782 (IRKTSEY) are G-loop. The interval 915–923 (QVKDRHNGN) is catalytic loop. An activation loop region spans residues 934–958 (HIDFGFMLSNSPGSVGFEAAPFKLT).

It belongs to the PI3/PI4-kinase family. Type III PI4K subfamily. Interacts with FRQ1.

Its subcellular location is the nucleus. It localises to the golgi apparatus. The protein localises to the trans-Golgi network. It catalyses the reaction a 1,2-diacyl-sn-glycero-3-phospho-(1D-myo-inositol) + ATP = a 1,2-diacyl-sn-glycero-3-phospho-(1D-myo-inositol 4-phosphate) + ADP + H(+). In terms of biological role, acts on phosphatidylinositol (PI) in the first committed step in the production of the second messenger inositol 1,4,5,-trisphosphate. PIK1 is part of a nuclear phosphoinositide cycle and could control cytokinesis through the actin cytoskeleton. Involved in the response to mating pheromone. This chain is Phosphatidylinositol 4-kinase PIK1, found in Saccharomyces cerevisiae (strain ATCC 204508 / S288c) (Baker's yeast).